A 338-amino-acid chain; its full sequence is Lipoyl synthase (338 aa).

The segment at 1 to 24 is disordered; sequence MTTVQEAVPNLIPTQDATPRPAPK. Residues C84, C89, C95, C110, C114, C117, and S324 each coordinate [4Fe-4S] cluster. The Radical SAM core domain occupies 96–313; it reads FSGGTATFMI…AEEGYKMGFK (218 aa).

This sequence belongs to the radical SAM superfamily. Lipoyl synthase family. [4Fe-4S] cluster is required as a cofactor.

The protein localises to the cytoplasm. The enzyme catalyses [[Fe-S] cluster scaffold protein carrying a second [4Fe-4S](2+) cluster] + N(6)-octanoyl-L-lysyl-[protein] + 2 oxidized [2Fe-2S]-[ferredoxin] + 2 S-adenosyl-L-methionine + 4 H(+) = [[Fe-S] cluster scaffold protein] + N(6)-[(R)-dihydrolipoyl]-L-lysyl-[protein] + 4 Fe(3+) + 2 hydrogen sulfide + 2 5'-deoxyadenosine + 2 L-methionine + 2 reduced [2Fe-2S]-[ferredoxin]. Its pathway is protein modification; protein lipoylation via endogenous pathway; protein N(6)-(lipoyl)lysine from octanoyl-[acyl-carrier-protein]: step 2/2. Its function is as follows. Catalyzes the radical-mediated insertion of two sulfur atoms into the C-6 and C-8 positions of the octanoyl moiety bound to the lipoyl domains of lipoate-dependent enzymes, thereby converting the octanoylated domains into lipoylated derivatives. This chain is Lipoyl synthase, found in Pseudomonas putida (strain W619).